The following is a 434-amino-acid chain: Homogentisate 1,2-dioxygenase (434 aa).

Histidine 289 functions as the Proton acceptor in the catalytic mechanism. Residues histidine 332 and glutamate 338 each contribute to the Fe cation site. Residues tyrosine 347 and histidine 368 each contribute to the homogentisate site. Histidine 368 contacts Fe cation.

The protein belongs to the homogentisate dioxygenase family. Hexamer; dimer of trimers. Requires Fe cation as cofactor.

The enzyme catalyses homogentisate + O2 = 4-maleylacetoacetate + H(+). It functions in the pathway amino-acid degradation; L-phenylalanine degradation; acetoacetate and fumarate from L-phenylalanine: step 4/6. Its function is as follows. Involved in the catabolism of homogentisate (2,5-dihydroxyphenylacetate or 2,5-OH-PhAc), a central intermediate in the degradation of phenylalanine and tyrosine. Catalyzes the oxidative ring cleavage of the aromatic ring of homogentisate to yield maleylacetoacetate. In Pseudomonas syringae pv. tomato (strain ATCC BAA-871 / DC3000), this protein is Homogentisate 1,2-dioxygenase.